A 471-amino-acid chain; its full sequence is Variant surface glycoprotein ILTAT 1.1BC (471 aa).

Positions 1–21 are cleaved as a signal peptide; sequence MVKAIASLMLLHIWAIEEIKA. Residue asparagine 130 is glycosylated (N-linked (GlcNAc...) asparagine). Residues 158–168 are compositionally biased toward polar residues; sequence TVSKTTECNTE. Disordered regions lie at residues 158-183 and 204-232; these read TVSK…TLSK and GGAC…TTAS. The segment covering 214–226 has biased composition (basic and acidic residues); the sequence is DKIHITNETDSKN. 2 N-linked (GlcNAc...) asparagine glycosylation sites follow: asparagine 220 and asparagine 260. Cystine bridges form between cysteine 397–cysteine 410 and cysteine 406–cysteine 421. The disordered stretch occupies residues 432–454; sequence AEQAATNQETEGKDGKTTNTTGS. Asparagine 450 carries an N-linked (GlcNAc...) asparagine glycan. Serine 454 is lipidated: GPI-anchor amidated serine. A propeptide spans 455-471 (removed in mature form); it reads NSFLINKAPVLLAFLLL.

It localises to the cell membrane. VSG forms a coat on the surface of the parasite. The trypanosome evades the immune response of the host by expressing a series of antigenically distinct VSGs from an estimated 1000 VSG genes. This chain is Variant surface glycoprotein ILTAT 1.1BC, found in Trypanosoma brucei brucei.